Here is a 1898-residue protein sequence, read N- to C-terminus: Protein NYNRIN (1898 aa).

5 disordered regions span residues 289-315 (SNNQ…STNH), 424-450 (LPSA…CPRP), 467-533 (DVKD…TDQS), 618-691 (EPTT…TDAG), and 711-731 (VSLL…SGTL). Polar residues predominate over residues 618–627 (EPTTPKTPQA). The span at 649–672 (PAATVSKAPAASKAPAAPKVPVTP) shows a compositional bias: low complexity. The RNase NYN domain occupies 792–942 (LRRVVIDGSS…LGRDGPTLDE (151 aa)). Positions 968–1019 (SASVTELSDDADSGPLESLPNMEEVREEKEERQDEEQRQGQGTQKAAEEDDL) are disordered. Basic and acidic residues predominate over residues 990–1005 (EEVREEKEERQDEEQR). Positions 1304–1450 (LSTFVCIHMS…VDTLAKQGAQ (147 aa)) constitute an RNase H type-1 domain. A run of 2 helical transmembrane segments spans residues 1372 to 1392 (VVFL…LPLW) and 1408 to 1428 (PSLL…PFIY). Residues 1609–1774 (RSTAPWSNLQ…ESRLTEPLWW (166 aa)) form the Integrase catalytic domain.

It localises to the membrane. In Homo sapiens (Human), this protein is Protein NYNRIN (NYNRIN).